The sequence spans 409 residues: Inactive serine protease 35 (409 aa).

The signal sequence occupies residues Met1–Gly17. N-linked (GlcNAc...) asparagine glycans are attached at residues Asn87 and Asn107. The Peptidase S1 domain occupies Val120–Ala404. Cys150 and Cys166 are disulfide-bonded. The segment covering Arg188–Arg203 has biased composition (basic residues). The interval Arg188–Arg246 is disordered. Over residues Arg204–Lys224 the composition is skewed to basic and acidic residues.

The protein belongs to the peptidase S1 family.

The protein localises to the secreted. The polypeptide is Inactive serine protease 35 (PRSS35) (Macaca mulatta (Rhesus macaque)).